The following is a 210-amino-acid chain: Small ribosomal subunit protein uS7 (210 aa).

It belongs to the universal ribosomal protein uS7 family.

The protein is Small ribosomal subunit protein uS7 (RPS5) of Podocoryna carnea (Hydrozoan).